Reading from the N-terminus, the 477-residue chain is Bifunctional protein HldE (477 aa).

Residues 1 to 318 (MKVNLPAFER…ENAVRGRADT (318 aa)) form a ribokinase region. 195 to 198 (NLSE) is an ATP binding site. Asp264 is an active-site residue. The cytidylyltransferase stretch occupies residues 344 to 477 (MTNGVFDILH…IKKIQTESEK (134 aa)).

It in the N-terminal section; belongs to the carbohydrate kinase PfkB family. This sequence in the C-terminal section; belongs to the cytidylyltransferase family. In terms of assembly, homodimer.

It catalyses the reaction D-glycero-beta-D-manno-heptose 7-phosphate + ATP = D-glycero-beta-D-manno-heptose 1,7-bisphosphate + ADP + H(+). The enzyme catalyses D-glycero-beta-D-manno-heptose 1-phosphate + ATP + H(+) = ADP-D-glycero-beta-D-manno-heptose + diphosphate. It participates in nucleotide-sugar biosynthesis; ADP-L-glycero-beta-D-manno-heptose biosynthesis; ADP-L-glycero-beta-D-manno-heptose from D-glycero-beta-D-manno-heptose 7-phosphate: step 1/4. The protein operates within nucleotide-sugar biosynthesis; ADP-L-glycero-beta-D-manno-heptose biosynthesis; ADP-L-glycero-beta-D-manno-heptose from D-glycero-beta-D-manno-heptose 7-phosphate: step 3/4. Its function is as follows. Catalyzes the phosphorylation of D-glycero-D-manno-heptose 7-phosphate at the C-1 position to selectively form D-glycero-beta-D-manno-heptose-1,7-bisphosphate. In terms of biological role, catalyzes the ADP transfer from ATP to D-glycero-beta-D-manno-heptose 1-phosphate, yielding ADP-D-glycero-beta-D-manno-heptose. The polypeptide is Bifunctional protein HldE (Salmonella dublin (strain CT_02021853)).